A 492-amino-acid polypeptide reads, in one-letter code: Asparagine--tRNA ligase, mitochondrial (492 aa).

This sequence belongs to the class-II aminoacyl-tRNA synthetase family.

Its subcellular location is the mitochondrion matrix. It catalyses the reaction tRNA(Asn) + L-asparagine + ATP = L-asparaginyl-tRNA(Asn) + AMP + diphosphate + H(+). Its function is as follows. Catalyzes the attachment of asparagine to tRNA(Asn) in the mitochondrion. The chain is Asparagine--tRNA ligase, mitochondrial (SLM5) from Saccharomyces cerevisiae (strain ATCC 204508 / S288c) (Baker's yeast).